Reading from the N-terminus, the 387-residue chain is 1-deoxy-D-xylulose 5-phosphate reductoisomerase (387 aa).

6 residues coordinate NADPH: Thr-10, Gly-11, Ser-12, Val-13, Asn-38, and Asn-119. 1-deoxy-D-xylulose 5-phosphate is bound at residue Lys-120. Glu-121 is a binding site for NADPH. Asp-145 contributes to the Mn(2+) binding site. 1-deoxy-D-xylulose 5-phosphate is bound by residues Ser-146, Glu-147, Ser-170, and His-193. Glu-147 contributes to the Mn(2+) binding site. Gly-199 is an NADPH binding site. 4 residues coordinate 1-deoxy-D-xylulose 5-phosphate: Ser-206, Asn-211, Lys-212, and Glu-215. Glu-215 provides a ligand contact to Mn(2+).

This sequence belongs to the DXR family. The cofactor is Mg(2+). It depends on Mn(2+) as a cofactor.

The catalysed reaction is 2-C-methyl-D-erythritol 4-phosphate + NADP(+) = 1-deoxy-D-xylulose 5-phosphate + NADPH + H(+). Its pathway is isoprenoid biosynthesis; isopentenyl diphosphate biosynthesis via DXP pathway; isopentenyl diphosphate from 1-deoxy-D-xylulose 5-phosphate: step 1/6. In terms of biological role, catalyzes the NADPH-dependent rearrangement and reduction of 1-deoxy-D-xylulose-5-phosphate (DXP) to 2-C-methyl-D-erythritol 4-phosphate (MEP). This chain is 1-deoxy-D-xylulose 5-phosphate reductoisomerase, found in Wolbachia pipientis wMel.